Here is a 165-residue protein sequence, read N- to C-terminus: Endoribonuclease YbeY (165 aa).

Zn(2+) contacts are provided by histidine 130, histidine 134, and histidine 140.

This sequence belongs to the endoribonuclease YbeY family. Requires Zn(2+) as cofactor.

The protein localises to the cytoplasm. Its function is as follows. Single strand-specific metallo-endoribonuclease involved in late-stage 70S ribosome quality control and in maturation of the 3' terminus of the 16S rRNA. The sequence is that of Endoribonuclease YbeY from Streptococcus pneumoniae serotype 2 (strain D39 / NCTC 7466).